The chain runs to 246 residues: Small ribosomal subunit protein uS3 (246 aa).

Residues 19 to 98 enclose the KH type-2 domain; sequence IDEWLAQNFY…NPMLDARVQA (80 aa). Positions 218 to 246 are disordered; it reads LQEETASTLREHMEAARPGEEHEEDREES. The segment covering 226-237 has biased composition (basic and acidic residues); that stretch reads LREHMEAARPGE.

It belongs to the universal ribosomal protein uS3 family. Part of the 30S ribosomal subunit.

Binds the lower part of the 30S subunit head. The protein is Small ribosomal subunit protein uS3 of Aeropyrum pernix (strain ATCC 700893 / DSM 11879 / JCM 9820 / NBRC 100138 / K1).